A 75-amino-acid polypeptide reads, in one-letter code: uncharacterized protein (75 aa).

This is an uncharacterized protein from Rickettsia conorii (strain ATCC VR-613 / Malish 7).